We begin with the raw amino-acid sequence, 437 residues long: Enolase (437 aa).

Residues His-160 and Glu-169 each contribute to the substrate site. The active-site Proton donor is the Glu-212. The Mg(2+) site is built by Asp-247, Glu-296, and Asp-321. 2 residues coordinate substrate: Glu-296 and Asp-321. Lys-346 acts as the Proton acceptor in catalysis. Residues 373 to 376 (SHRS) and Lys-397 contribute to the substrate site.

This sequence belongs to the enolase family. As to quaternary structure, homodimer. It depends on Mg(2+) as a cofactor.

The protein resides in the cytoplasm. The catalysed reaction is (2R)-2-phosphoglycerate = phosphoenolpyruvate + H2O. Its pathway is carbohydrate degradation; glycolysis; pyruvate from D-glyceraldehyde 3-phosphate: step 4/5. This Eremothecium gossypii (strain ATCC 10895 / CBS 109.51 / FGSC 9923 / NRRL Y-1056) (Yeast) protein is Enolase (ENO).